We begin with the raw amino-acid sequence, 1496 residues long: Chromosome partition protein MukB (1496 aa).

Gly-63–Ser-70 serves as a coordination point for ATP. 5 coiled-coil regions span residues Lys-328 to Ser-493, Lys-536 to Trp-632, Arg-808 to Arg-832, Asn-861 to Glu-1171, and Ile-1235 to Ile-1291. Positions Pro-694–Arg-811 are flexible hinge. A compositionally biased stretch (basic and acidic residues) spans Arg-1082–Gln-1091. The interval Arg-1082–Lys-1101 is disordered.

This sequence belongs to the SMC family. MukB subfamily. Homodimerization via its hinge domain. Binds to DNA via its C-terminal region. Interacts, and probably forms a ternary complex, with MukE and MukF via its C-terminal region. The complex formation is stimulated by calcium or magnesium. Interacts with tubulin-related protein FtsZ.

The protein localises to the cytoplasm. It is found in the nucleoid. Plays a central role in chromosome condensation, segregation and cell cycle progression. Functions as a homodimer, which is essential for chromosome partition. Involved in negative DNA supercoiling in vivo, and by this means organize and compact chromosomes. May achieve or facilitate chromosome segregation by condensation DNA from both sides of a centrally located replisome during cell division. This Actinobacillus pleuropneumoniae serotype 5b (strain L20) protein is Chromosome partition protein MukB.